Consider the following 221-residue polypeptide: uncharacterized protein (221 aa).

The MOSC domain maps to 33 to 167 (RPAKSAVMLY…VSPGANLELL (135 aa)).

This is an uncharacterized protein from Bacillus subtilis (strain 168).